A 566-amino-acid chain; its full sequence is NXPE family member 3 (566 aa).

The first 32 residues, 1–32 (MEKYFPKYVPFFSLLALSGLLYLLWSITSLES), serve as a signal peptide directing secretion. N-linked (GlcNAc...) asparagine glycosylation is found at Asn-64, Asn-172, Asn-242, Asn-303, and Asn-344.

Belongs to the NXPE family.

The protein localises to the secreted. This Danio rerio (Zebrafish) protein is NXPE family member 3 (nxpe3).